The primary structure comprises 95 residues: Co-chaperonin GroES (95 aa).

It belongs to the GroES chaperonin family. Heptamer of 7 subunits arranged in a ring. Interacts with the chaperonin GroEL.

Its subcellular location is the cytoplasm. Functionally, together with the chaperonin GroEL, plays an essential role in assisting protein folding. The GroEL-GroES system forms a nano-cage that allows encapsulation of the non-native substrate proteins and provides a physical environment optimized to promote and accelerate protein folding. GroES binds to the apical surface of the GroEL ring, thereby capping the opening of the GroEL channel. The chain is Co-chaperonin GroES from Cereibacter sphaeroides (strain KD131 / KCTC 12085) (Rhodobacter sphaeroides).